Consider the following 993-residue polypeptide: Vinculin (993 aa).

2 tandem repeats follow at residues 258 to 364 (DSDN…TKEI) and 373 to 480 (TNTQ…ELVD). The 2 X repeats stretch occupies residues 258–480 (DSDNVTVMRK…LRNKLRELVD (223 aa)). Residues 730–797 (ITGAGGSRPP…PPPETDDEEE (68 aa)) are disordered. Basic and acidic residues predominate over residues 758 to 768 (VHDRIYIREDI). Residues 769-790 (PTPPRPPPPVEISPPPRPPPPP) show a composition bias toward pro residues.

The protein belongs to the vinculin/alpha-catenin family. Exhibits self-association properties.

The protein resides in the cytoplasm. It localises to the cytoskeleton. Its subcellular location is the cell junction. It is found in the adherens junction. The protein localises to the cell membrane. Involved in cell adhesion. May be involved in the attachment of the actin-based microfilaments to the plasma membrane. The chain is Vinculin from Brugia malayi (Filarial nematode worm).